Consider the following 611-residue polypeptide: Actin-related protein 5 (611 aa).

Coiled-coil stretches lie at residues 290–329 (TLTS…LDRL) and 355–386 (SAEE…NIEV).

Belongs to the actin family. ARP5 subfamily. As to quaternary structure, component of the chromatin remodeling INO80 complex.

It localises to the nucleus. Proposed core component of the chromatin remodeling INO80 complex which is involved in transcriptional regulation, DNA replication and probably DNA repair. The sequence is that of Actin-related protein 5 (ACTR5) from Gallus gallus (Chicken).